Here is a 118-residue protein sequence, read N- to C-terminus: Large ribosomal subunit protein bL20c (118 aa).

This sequence belongs to the bacterial ribosomal protein bL20 family.

The protein resides in the plastid. It localises to the chloroplast. Its function is as follows. Binds directly to 23S ribosomal RNA and is necessary for the in vitro assembly process of the 50S ribosomal subunit. It is not involved in the protein synthesizing functions of that subunit. This Gracilaria tenuistipitata var. liui (Red alga) protein is Large ribosomal subunit protein bL20c.